A 702-amino-acid polypeptide reads, in one-letter code: Protein crooked neck (702 aa).

13 HAT repeats span residues 56 to 88 (DYQQRKRKTFEDNLRKNRMVVSHWIKYAQWEEQ), 90 to 122 (QEIQRARSIWERALDNEHRNVTLWLKYAEMEMK), 124 to 156 (KQVNHARNLWDRAVTIMPRVNQFWYKYTYMEEM), 158 to 189 (ENVAGARQVFERWMEWQPEEQAWQTYVNFELR), 191 to 222 (KEIDRAREIYERFVYVHPDVKNWIKFARFEES), 224 to 259 (GFIHGSRRVFERAVEFFGDDYIEERLFIAFARFEEG), 261 to 295 (KEHDRARIIYKYALDHLPKDRTQELFKAYTKHEKK), 305 to 337 (VIVSKRKYQYEQEVAANPTNYDAWFDYLRLIEA), 339 to 373 (GDRDQIRETYERAISNVPPANEKNFWRRYIYLWIN), 383 to 419 (EDAERTRQIYKTCLELIPHKQFTFSKLWLLYAQFEIR), 454 to 486 (REFERCRMLYEKFLEFGPENCVTWMKFAELENL), 488 to 522 (GDTDRARAIFELAVQQPRLDMPELLWKAYIDFEVA), and 524 to 555 (GETELARQLYERLLERTQHVKVWMSFAKFEMG). Positions 620-628 (PRRIKKRQK) match the Nuclear localization signal motif. The interval 670-702 (KDNTVDDPPATAIASEPEPAADAAPADTTDSGD) is disordered. The segment covering 683–702 (ASEPEPAADAAPADTTDSGD) has biased composition (low complexity).

It belongs to the crooked-neck family. As to quaternary structure, colocalizes with a complex containing snRNP proteins. Transcribed in all cells during embryonic development.

It is found in the nucleus speckle. Its function is as follows. May be involved in pre-mRNA splicing process. Involved in embryonic neurogenesis and cell rearrangement during Malpighian tubule morphogenesis. This is Protein crooked neck (crn) from Drosophila melanogaster (Fruit fly).